A 259-amino-acid polypeptide reads, in one-letter code: Thiazole synthase (259 aa).

K99 (schiff-base intermediate with DXP) is an active-site residue. Residues G160, 186-187 (AG), and 208-209 (NT) each bind 1-deoxy-D-xylulose 5-phosphate.

Belongs to the ThiG family. Homotetramer. Forms heterodimers with either ThiH or ThiS.

Its subcellular location is the cytoplasm. The catalysed reaction is [ThiS sulfur-carrier protein]-C-terminal-Gly-aminoethanethioate + 2-iminoacetate + 1-deoxy-D-xylulose 5-phosphate = [ThiS sulfur-carrier protein]-C-terminal Gly-Gly + 2-[(2R,5Z)-2-carboxy-4-methylthiazol-5(2H)-ylidene]ethyl phosphate + 2 H2O + H(+). Its pathway is cofactor biosynthesis; thiamine diphosphate biosynthesis. Catalyzes the rearrangement of 1-deoxy-D-xylulose 5-phosphate (DXP) to produce the thiazole phosphate moiety of thiamine. Sulfur is provided by the thiocarboxylate moiety of the carrier protein ThiS. In vitro, sulfur can be provided by H(2)S. The protein is Thiazole synthase of Porphyromonas gingivalis (strain ATCC BAA-308 / W83).